The chain runs to 470 residues: GTPase Der (470 aa).

2 consecutive EngA-type G domains span residues 2–165 and 201–372; these read KTIA…GLEA and IRVG…ENFS. GTP contacts are provided by residues 8 to 15, 55 to 59, 117 to 120, 207 to 214, 254 to 258, and 318 to 321; these read GKPNVGKS, DTGGI, NKID, GKVNVGKS, DTAGI, and NKWD. The 85-residue stretch at 373–457 folds into the KH-like domain; that stretch reads RRIPTSILNK…PILIRARKRG (85 aa).

This sequence belongs to the TRAFAC class TrmE-Era-EngA-EngB-Septin-like GTPase superfamily. EngA (Der) GTPase family. Associates with the 50S ribosomal subunit.

In terms of biological role, GTPase that plays an essential role in the late steps of ribosome biogenesis. This chain is GTPase Der, found in Wolinella succinogenes (strain ATCC 29543 / DSM 1740 / CCUG 13145 / JCM 31913 / LMG 7466 / NCTC 11488 / FDC 602W) (Vibrio succinogenes).